We begin with the raw amino-acid sequence, 692 residues long: Glycine--tRNA ligase beta subunit (692 aa).

The protein belongs to the class-II aminoacyl-tRNA synthetase family. As to quaternary structure, tetramer of two alpha and two beta subunits.

The protein localises to the cytoplasm. The enzyme catalyses tRNA(Gly) + glycine + ATP = glycyl-tRNA(Gly) + AMP + diphosphate. The polypeptide is Glycine--tRNA ligase beta subunit (Limosilactobacillus fermentum (strain NBRC 3956 / LMG 18251) (Lactobacillus fermentum)).